A 350-amino-acid chain; its full sequence is S-adenosylmethionine:tRNA ribosyltransferase-isomerase (350 aa).

It belongs to the QueA family. As to quaternary structure, monomer.

It localises to the cytoplasm. The catalysed reaction is 7-aminomethyl-7-carbaguanosine(34) in tRNA + S-adenosyl-L-methionine = epoxyqueuosine(34) in tRNA + adenine + L-methionine + 2 H(+). It functions in the pathway tRNA modification; tRNA-queuosine biosynthesis. Functionally, transfers and isomerizes the ribose moiety from AdoMet to the 7-aminomethyl group of 7-deazaguanine (preQ1-tRNA) to give epoxyqueuosine (oQ-tRNA). This chain is S-adenosylmethionine:tRNA ribosyltransferase-isomerase, found in Vibrio vulnificus (strain CMCP6).